Here is a 363-residue protein sequence, read N- to C-terminus: NAD kinase 1 (363 aa).

Asp-68 serves as the catalytic Proton acceptor. NAD(+) is bound by residues 68–69 (DG), Arg-73, 175–176 (ND), Arg-186, Asp-205, Ala-240, and Gln-275.

It belongs to the NAD kinase family. The cofactor is a divalent metal cation.

It localises to the cytoplasm. It carries out the reaction NAD(+) + ATP = ADP + NADP(+) + H(+). In terms of biological role, involved in the regulation of the intracellular balance of NAD and NADP, and is a key enzyme in the biosynthesis of NADP. Catalyzes specifically the phosphorylation on 2'-hydroxyl of the adenosine moiety of NAD to yield NADP. This chain is NAD kinase 1, found in Streptomyces coelicolor (strain ATCC BAA-471 / A3(2) / M145).